The chain runs to 372 residues: Carbamoyl phosphate synthase small chain (372 aa).

The segment at 1–179 (MRAILALEDG…ALVTGKTLPP (179 aa)) is CPSase. Residues S45, G231, and G233 each coordinate L-glutamine. Residues 183-369 (DIVAFDFGIK…RKMIAASKRQ (187 aa)) enclose the Glutamine amidotransferase type-1 domain. Catalysis depends on C258, which acts as the Nucleophile. Residues L259, Q262, N300, G302, and F303 each contribute to the L-glutamine site. Active-site residues include H342 and E344.

This sequence belongs to the CarA family. As to quaternary structure, composed of two chains; the small (or glutamine) chain promotes the hydrolysis of glutamine to ammonia, which is used by the large (or ammonia) chain to synthesize carbamoyl phosphate. Tetramer of heterodimers (alpha,beta)4.

The enzyme catalyses hydrogencarbonate + L-glutamine + 2 ATP + H2O = carbamoyl phosphate + L-glutamate + 2 ADP + phosphate + 2 H(+). It carries out the reaction L-glutamine + H2O = L-glutamate + NH4(+). The protein operates within amino-acid biosynthesis; L-arginine biosynthesis; carbamoyl phosphate from bicarbonate: step 1/1. It participates in pyrimidine metabolism; UMP biosynthesis via de novo pathway; (S)-dihydroorotate from bicarbonate: step 1/3. Functionally, small subunit of the glutamine-dependent carbamoyl phosphate synthetase (CPSase). CPSase catalyzes the formation of carbamoyl phosphate from the ammonia moiety of glutamine, carbonate, and phosphate donated by ATP, constituting the first step of 2 biosynthetic pathways, one leading to arginine and/or urea and the other to pyrimidine nucleotides. The small subunit (glutamine amidotransferase) binds and cleaves glutamine to supply the large subunit with the substrate ammonia. In Akkermansia muciniphila (strain ATCC BAA-835 / DSM 22959 / JCM 33894 / BCRC 81048 / CCUG 64013 / CIP 107961 / Muc), this protein is Carbamoyl phosphate synthase small chain.